We begin with the raw amino-acid sequence, 62 residues long: Photosystem II reaction center protein Z (62 aa).

The next 2 helical transmembrane spans lie at 8–28 (ALLL…VLYA) and 41–61 (LVGG…NYFV).

Belongs to the PsbZ family. As to quaternary structure, PSII is composed of 1 copy each of membrane proteins PsbA, PsbB, PsbC, PsbD, PsbE, PsbF, PsbH, PsbI, PsbJ, PsbK, PsbL, PsbM, PsbT, PsbX, PsbY, PsbZ, Psb30/Ycf12, peripheral proteins PsbO, CyanoQ (PsbQ), PsbU, PsbV and a large number of cofactors. It forms dimeric complexes.

Its subcellular location is the cellular thylakoid membrane. May control the interaction of photosystem II (PSII) cores with the light-harvesting antenna, regulates electron flow through the 2 photosystem reaction centers. PSII is a light-driven water plastoquinone oxidoreductase, using light energy to abstract electrons from H(2)O, generating a proton gradient subsequently used for ATP formation. This chain is Photosystem II reaction center protein Z, found in Synechococcus elongatus (strain ATCC 33912 / PCC 7942 / FACHB-805) (Anacystis nidulans R2).